The following is a 320-amino-acid chain: Cytochrome f (320 aa).

A signal peptide spans 1-35 (MKLNSLINLIQKSIYSCTLLLIILNIICVAPNSSN). Residues Phe-37, Cys-57, Cys-60, and His-61 each contribute to the heme site. A helical membrane pass occupies residues 286–306 (IKGMIVFFFASVLAQIFFVLK).

It belongs to the cytochrome f family. In terms of assembly, the 4 large subunits of the cytochrome b6-f complex are cytochrome b6, subunit IV (17 kDa polypeptide, petD), cytochrome f and the Rieske protein, while the 4 small subunits are PetG, PetL, PetM and PetN. The complex functions as a dimer. It depends on heme as a cofactor.

It is found in the plastid. It localises to the chloroplast thylakoid membrane. Functionally, component of the cytochrome b6-f complex, which mediates electron transfer between photosystem II (PSII) and photosystem I (PSI), cyclic electron flow around PSI, and state transitions. The chain is Cytochrome f from Pyropia yezoensis (Susabi-nori).